The primary structure comprises 265 residues: Iron(3+)-hydroxamate import ATP-binding protein FhuC (265 aa).

Residues 12–248 form the ABC transporter domain; the sequence is FALRNISFRV…ETLEMIYGIP (237 aa). ATP contacts are provided by residues 44–51 and 168–179; these read GHNGSGKS and CLLLDEPTSALD.

The protein belongs to the ABC transporter superfamily. Iron (Fe3+)-hydroxamate importer (TC 3.A.1.14.7) family. In terms of assembly, the complex is composed of two ATP-binding proteins (FhuC), a transmembrane protein (FhuB) and a solute-binding protein (FhuD). FhuC interacts with FhuB.

The protein localises to the cell inner membrane. It catalyses the reaction ATP + H2O + Fe(3+)-hydroxamate complex-[hydroxamate-binding protein]Side 1 = ADP + phosphate + Fe(3+)-hydroxamate complexSide 2 + [hydroxamate-binding protein]Side 1.. With respect to regulation, ATPase activity is inhibited by vanadate. Its function is as follows. Part of the ABC transporter complex FhuCDB involved in iron(3+)-hydroxamate import. Responsible for energy coupling to the transport system. The polypeptide is Iron(3+)-hydroxamate import ATP-binding protein FhuC (fhuC) (Escherichia coli (strain K12)).